A 566-amino-acid chain; its full sequence is Cytochrome c oxidase subunit 1 (566 aa).

7 helical membrane passes run 29–49 (IGVL…AFTV), 97–117 (VMIT…ALFG), 141–161 (LSYW…FAPG), 189–209 (LAIF…INMI), 227–247 (LFAW…PVLA), 278–298 (ILWF…FGIV), and 310–330 (IFGY…GFVV). A Fe(II)-heme a-binding site is contributed by His102. The Cu cation site is built by His284 and Tyr288. The 1'-histidyl-3'-tyrosine (His-Tyr) cross-link spans 284–288 (HPEVY). The Cu cation site is built by His333 and His334. The next 2 membrane-spanning stretches (helical) occupy residues 348–368 (FMMA…SWIA) and 381–401 (MLWA…GIVL). His419 contacts heme a3. A run of 3 helical transmembrane segments spans residues 420 to 440 (FHYV…YFWI), 455 to 475 (LHFW…HFLG), and 499 to 519 (LGAF…FYTL). His421 is a Fe(II)-heme a binding site. The disordered stretch occupies residues 543–566 (TSPPPEHTFEQLPKREDWERAPAH). Residues 549–566 (HTFEQLPKREDWERAPAH) show a composition bias toward basic and acidic residues.

Belongs to the heme-copper respiratory oxidase family. It depends on Cu(2+) as a cofactor. Requires heme as cofactor.

It is found in the cell membrane. It catalyses the reaction 4 Fe(II)-[cytochrome c] + O2 + 8 H(+)(in) = 4 Fe(III)-[cytochrome c] + 2 H2O + 4 H(+)(out). It functions in the pathway energy metabolism; oxidative phosphorylation. In terms of biological role, cytochrome c oxidase is the component of the respiratory chain that catalyzes the reduction of oxygen to water. Subunits 1-3 form the functional core of the enzyme complex. Co I is the catalytic subunit of the enzyme. Electrons originating in cytochrome c are transferred via the copper A center of subunit 2 and heme a of subunit 1 to the bimetallic center formed by heme a3 and copper B. This cytochrome c oxidase shows proton pump activity across the membrane in addition to the electron transfer. This Cereibacter sphaeroides (Rhodobacter sphaeroides) protein is Cytochrome c oxidase subunit 1 (ctaD).